The following is a 376-amino-acid chain: Uroporphyrinogen decarboxylase (376 aa).

Residues 29–33, aspartate 79, tyrosine 155, serine 210, and histidine 342 each bind substrate; that span reads RQAGR.

The protein belongs to the uroporphyrinogen decarboxylase family. In terms of assembly, homodimer.

Its subcellular location is the cytoplasm. It carries out the reaction uroporphyrinogen III + 4 H(+) = coproporphyrinogen III + 4 CO2. Its pathway is porphyrin-containing compound metabolism; protoporphyrin-IX biosynthesis; coproporphyrinogen-III from 5-aminolevulinate: step 4/4. Its function is as follows. Catalyzes the decarboxylation of four acetate groups of uroporphyrinogen-III to yield coproporphyrinogen-III. The protein is Uroporphyrinogen decarboxylase of Paracidovorax citrulli (strain AAC00-1) (Acidovorax citrulli).